Reading from the N-terminus, the 191-residue chain is Adenine phosphoribosyltransferase (191 aa).

It belongs to the purine/pyrimidine phosphoribosyltransferase family. As to quaternary structure, homodimer.

Its subcellular location is the cytoplasm. The enzyme catalyses AMP + diphosphate = 5-phospho-alpha-D-ribose 1-diphosphate + adenine. It participates in purine metabolism; AMP biosynthesis via salvage pathway; AMP from adenine: step 1/1. Its function is as follows. Catalyzes a salvage reaction resulting in the formation of AMP, that is energically less costly than de novo synthesis. The protein is Adenine phosphoribosyltransferase of Clavibacter sepedonicus (Clavibacter michiganensis subsp. sepedonicus).